Here is a 71-residue protein sequence, read N- to C-terminus: Large ribosomal subunit protein bL31 (71 aa).

Belongs to the bacterial ribosomal protein bL31 family. Type A subfamily. Part of the 50S ribosomal subunit.

Its function is as follows. Binds the 23S rRNA. The polypeptide is Large ribosomal subunit protein bL31 (rpmE) (Mycoplasmopsis synoviae (strain 53) (Mycoplasma synoviae)).